The chain runs to 536 residues: MATPDAGLPGAEGVEPAPWAQLEAPARLLLQALQAGPEGARRGLGVLRALGSRGWEPFDWGRLLEALCREEPVVQGPDGRLELKPLLLRLPRICQRNLMSLLMAVRPSLPESGLLSVLQIAQQDLAPDPDAWLRALGELLRRDLGVGTSMEGASPLSERCQRQLQSLCRGLGLGGRRLKSPQAPDPEEEENRDSQQPGKRRKDSEEEAASPEGKRVPKRLRCWEEEEDHEKERPEHKSLESLADGGSASPIKDQPVMAVKTGEDGSNLDDAKGLAESLELPKAIQDQLPRLQQLLKTLEEGLEGLEDAPPVELQLLHECSPSQMDLLCAQLQLPQLSDLGLLRLCTWLLALSPDLSLSNATVLTRSLFLGRILSLTSSASRLLTTALTSFCAKYTYPVCSALLDPVLQAPGTGPAQTELLCCLVKMESLEPDAQVLMLGQILELPWKEETFLVLQSLLERQVEMTPEKFSVLMEKLCKKGLAATTSMAYAKLMLTVMTKYQANITETQRLGLAMALEPNTTFLRKSLKAALKHLGP.

An interaction with FANCC region spans residues 150–371; it reads MEGASPLSER…VLTRSLFLGR (222 aa). The interval 171 to 252 is disordered; it reads LGLGGRRLKS…ADGGSASPIK (82 aa). The segment covering 230-239 has biased composition (basic and acidic residues); the sequence is EKERPEHKSL. Ser-249 is modified (phosphoserine). Thr-346 is modified (phosphothreonine; by CHEK1). Ser-374 bears the Phosphoserine; by CHEK1 mark.

In terms of assembly, belongs to the multisubunit FA complex composed of FANCA, FANCB, FANCC, FANCE, FANCF, FANCG, FANCL/PHF9 and FANCM. The complex is not found in FA patients. Interacts with FANCC and FANCD2. Phosphorylated. Phosphorylation by CHEK1 at Thr-346 and Ser-374 regulates its function in DNA cross-links repair. Post-translationally, ubiquitinated. Phosphorylation by CHEK1 induces polyubiquitination and degradation.

Its subcellular location is the nucleus. As part of the Fanconi anemia (FA) complex functions in DNA cross-links repair. Required for the nuclear accumulation of FANCC and provides a critical bridge between the FA complex and FANCD2. The sequence is that of Fanconi anemia group E protein (FANCE) from Homo sapiens (Human).